A 277-amino-acid chain; its full sequence is Large ribosomal subunit protein uL2 (277 aa).

The disordered stretch occupies residues 222–277 (GSVMNPNDHPHGGGEGKAPVGRKAPSTPWGKPALGLKTRNKKAKSDKLIVRRRNQK).

The protein belongs to the universal ribosomal protein uL2 family. Part of the 50S ribosomal subunit. Forms a bridge to the 30S subunit in the 70S ribosome.

In terms of biological role, one of the primary rRNA binding proteins. Required for association of the 30S and 50S subunits to form the 70S ribosome, for tRNA binding and peptide bond formation. It has been suggested to have peptidyltransferase activity; this is somewhat controversial. Makes several contacts with the 16S rRNA in the 70S ribosome. In Streptococcus agalactiae serotype Ia (strain ATCC 27591 / A909 / CDC SS700), this protein is Large ribosomal subunit protein uL2.